Here is a 529-residue protein sequence, read N- to C-terminus: Glycerol kinase 5 (529 aa).

ATP is bound by residues Ser-28 and Ser-29. Glycerol is bound by residues Arg-98, Asp-275, and Gln-276. Residues Thr-297, Gly-340, and Gly-440 each coordinate ATP.

It belongs to the FGGY kinase family.

Its subcellular location is the cytoplasm. The enzyme catalyses glycerol + ATP = sn-glycerol 3-phosphate + ADP + H(+). The protein operates within polyol metabolism; glycerol degradation via glycerol kinase pathway; sn-glycerol 3-phosphate from glycerol: step 1/1. Its function is as follows. Skin-specific kinase that plays a key role in glycerol metabolism, catalyzing its phosphorylation to produce sn-glycerol 3-phosphate. Involved in skin-specific regulation of sterol regulatory element-binding protein (SREBP) processing and lipid biosynthesis. The polypeptide is Glycerol kinase 5 (Homo sapiens (Human)).